Here is a 428-residue protein sequence, read N- to C-terminus: UPF0229 protein YeaH (428 aa).

A compositionally biased stretch (basic and acidic residues) spans 77 to 90 (PGNDHFIQNDRIER). The segment at 77–111 (PGNDHFIQNDRIERPQSGGGGGSGSGQGQASQDGE) is disordered. A compositionally biased stretch (gly residues) spans 93-103 (SGGGGGSGSGQ).

It belongs to the UPF0229 family.

This chain is UPF0229 protein YeaH, found in Salmonella typhi.